The chain runs to 179 residues: uncharacterized protein (179 aa).

This is an uncharacterized protein from Bacillus subtilis (strain 168).